Here is an 88-residue protein sequence, read N- to C-terminus: Protein A19 homolog (88 aa).

Positions 1–28 (MADSTAGAKKRKKRSTSATSTRKEPPTV) are disordered.

This sequence belongs to the chordopoxvirinae A19 family.

This chain is Protein A19 homolog, found in Fowlpox virus (strain NVSL) (FPV).